The sequence spans 1252 residues: DNA-directed RNA polymerase subunit beta (1252 aa).

It belongs to the RNA polymerase beta chain family. The RNAP catalytic core consists of 2 alpha, 1 beta, 1 beta' and 1 omega subunit. When a sigma factor is associated with the core the holoenzyme is formed, which can initiate transcription.

It catalyses the reaction RNA(n) + a ribonucleoside 5'-triphosphate = RNA(n+1) + diphosphate. Its function is as follows. DNA-dependent RNA polymerase catalyzes the transcription of DNA into RNA using the four ribonucleoside triphosphates as substrates. This is DNA-directed RNA polymerase subunit beta from Chlamydia muridarum (strain MoPn / Nigg).